The sequence spans 262 residues: tRNA pseudouridine synthase A (262 aa).

The Nucleophile role is filled by Asp-51. Tyr-109 lines the substrate pocket.

It belongs to the tRNA pseudouridine synthase TruA family. Homodimer.

It catalyses the reaction uridine(38/39/40) in tRNA = pseudouridine(38/39/40) in tRNA. Its function is as follows. Formation of pseudouridine at positions 38, 39 and 40 in the anticodon stem and loop of transfer RNAs. This chain is tRNA pseudouridine synthase A, found in Legionella pneumophila (strain Lens).